Here is a 745-residue protein sequence, read N- to C-terminus: VCP-like ATPase (745 aa).

ATP contacts are provided by residues 231–238 (GPPGTGKT) and 508–515 (GPPGVGKT).

Belongs to the AAA ATPase family. CDC48 subfamily. In terms of assembly, homohexamer. Forms a ring-shaped particle.

This is VCP-like ATPase (vat) from Thermoplasma acidophilum (strain ATCC 25905 / DSM 1728 / JCM 9062 / NBRC 15155 / AMRC-C165).